The chain runs to 345 residues: UPF0228 protein MA_2656 (345 aa).

This sequence belongs to the UPF0228 family.

This Methanosarcina acetivorans (strain ATCC 35395 / DSM 2834 / JCM 12185 / C2A) protein is UPF0228 protein MA_2656.